The chain runs to 793 residues: Serine/threonine-protein kinase MARK1 (793 aa).

The disordered stretch occupies residues 1–40 (MSARTPLPTVNERDTENHTSVDGYTETHIPPTKSSSRQNI). At T5 the chain carries Phosphothreonine. One can recognise a Protein kinase domain in the interval 60-311 (YRLQKTIGKG…LEQIMKDRWM (252 aa)). Residues 66–74 (IGKGNFAKV) and K89 contribute to the ATP site. The Proton acceptor role is filled by D182. T208 is modified (phosphothreonine). Residue T215 is modified to Phosphothreonine; by LKB1 and TAOK1. S219 is modified (phosphoserine; by GSK3-beta). The region spanning 329–370 (DLNDAKRIDIMVTMGFARDEINDALVSQKYDEVMATYILLGR) is the UBA domain. Disordered stretches follow at residues 377 to 499 (GGES…GGSM) and 517 to 697 (LQNG…KPRS). Positions 380–403 (SLSSGNLCQRSRPSSDLNNSTLQS) are enriched in polar residues. A phosphoserine mark is found at S382, S390, S393, S403, S423, and S444. Residues 447-459 (SEQKEEWDKDTAR) show a composition bias toward basic and acidic residues. The span at 462-473 (GSTTVGSKSEVT) shows a compositional bias: polar residues. At S475 the chain carries Phosphoserine. Over residues 487 to 499 (AGPSNNVYSGGSM) the composition is skewed to polar residues. Low complexity-rich tracts occupy residues 523–547 (SSLT…GPSA) and 585–599 (PAAS…ASTP). S588 carries the phosphoserine modification. T613 carries the phosphothreonine; by PKC/PRKCZ modification. Positions 647–657 (GTSTGIISKIT) are enriched in polar residues. 2 stretches are compositionally biased toward basic and acidic residues: residues 661-676 (VRRD…RTDT) and 683-695 (EPKD…EAKP). Position 666 is a phosphoserine (S666). Positions 744-793 (DARQDSLVQWEMEVCKLPRLSLNGVRFKRISGTSIAFKNIASKIANELKL) constitute a KA1 domain.

The protein belongs to the protein kinase superfamily. CAMK Ser/Thr protein kinase family. SNF1 subfamily. As to quaternary structure, interacts with MAPT/TAU. Requires Mg(2+) as cofactor. Phosphorylation at Thr-613 by PRKCZ/aPKC in polarized epithelial cells inhibits the kinase activity. Phosphorylated at Thr-215 by STK11/LKB1 in complex with STE20-related adapter-alpha (STRADA) pseudo kinase and CAB39. Phosphorylation at Thr-215 by TAOK1 activates the kinase activity, leading to phosphorylation and detachment of MAPT/TAU from microtubules. Phosphorylation at Ser-219 by GSK3-beta (GSK3B) inhibits the kinase activity. As to expression, highly expressed in brain and spleen and at lower levels in kidney and skeletal muscle.

It is found in the cell membrane. The protein localises to the cytoplasm. It localises to the cytoskeleton. Its subcellular location is the cell projection. The protein resides in the dendrite. The enzyme catalyses L-seryl-[protein] + ATP = O-phospho-L-seryl-[protein] + ADP + H(+). It carries out the reaction L-threonyl-[protein] + ATP = O-phospho-L-threonyl-[protein] + ADP + H(+). The catalysed reaction is L-seryl-[tau protein] + ATP = O-phospho-L-seryl-[tau protein] + ADP + H(+). It catalyses the reaction L-threonyl-[tau protein] + ATP = O-phospho-L-threonyl-[tau protein] + ADP + H(+). With respect to regulation, activated by phosphorylation on Thr-215. Inhibited by phosphorylation at Ser-219. Serine/threonine-protein kinase. Involved in cell polarity and microtubule dynamics regulation. Phosphorylates DCX, MAP2 and MAP4. Phosphorylates the microtubule-associated protein MAPT/TAU. Involved in cell polarity by phosphorylating the microtubule-associated proteins MAP2, MAP4 and MAPT/TAU at KXGS motifs, causing detachment from microtubules, and their disassembly. Involved in the regulation of neuronal migration through its dual activities in regulating cellular polarity and microtubule dynamics, possibly by phosphorylating and regulating DCX. Also acts as a positive regulator of the Wnt signaling pathway, probably by mediating phosphorylation of dishevelled proteins (DVL1, DVL2 and/or DVL3). The polypeptide is Serine/threonine-protein kinase MARK1 (Rattus norvegicus (Rat)).